Here is a 1082-residue protein sequence, read N- to C-terminus: MAEAVDEDSGVGRSLEESSNGQHSQAGEALSEWRSSGQVENGTPSTSPSYWDIDDDDDYGLKPSELYGQYTWKIPKFSEITKREHRSNVFEAGGYKWYILIYPQGCDVCNHLSLFLCVANYDKLLPGSFAILEAGWSQFAQFTISVLSQDLKKSKFSDTLHRFWKKEHDWGWKKFMELPKLKDGFIDESGCLTIEAKVQVIRERVDRPFRCLDCGYRRELVRVYFQNVEQICRRFVEEKRSKLGRLIEDKARWTSFGVFWLGMDQNSRRRMCREKVDVILKGVVKHFFVEKEVSSTLVMDSLYSGLKALEGQTKNMKARSRLLDAKQLPAPIVSVDKDMFVLVDDVLLLLERAALEPLPPKDEKGRQNRTKDGNDGEEVNKEADERDERRLTELGRRTVEIFILSHIFSTKIEVAHQEAIALKRQEELIREEEEAWLAETEQRAKRGAAEREKKSKKKQAKQKRNKNKGKDKRKEEKVSFATHAKDLEENQNQNQNDEEEKDSVTEKAQSSAEKPDTLGDVSDISDSVDGSADILQPDLEDRDSSSVLWDTDALEIHPPSSEGSSRGRGISISTPNGITEGKSHSTMDDSSSTCSNDSIRSGVTNGSYQGNSLNFRNQKSPNKGKNQQVKAMTDAHSLASETDDQPSTLGTDPKGQNYSSEASNVGESDWVVVSHIQEPEGSRNRIPVGRERKTVQSIVNSVDMDRPKEKSTAVLSSPRNVAKNPSPLTQTKPEKKSISTADGIPNRKVLATGPPSSSQVVLPSDIQSQTVGLRADMQKLSAPKQPPATTISRPSSAPIIPAMRPSPITVSSSVQTTTSLPRSVSSAGRLGPDPSLHNQQTYTPQSYKNAIVGNSLGSSSSSFNHHPSSHGVVPTTLPSSSYSQAPTSSYQSSFPYSQDGLLWTGRSPSSVNMGMYNNTYSPAVTSNRSLNHMDVQIAQQQAQSMMTDEFPHLDIINDLLEDEQCSNMVYNGSIFNPQPQVFNGQYSSYHGELLSGGRTRSFGEEGLHYMARGPYGTDGMMPRQWQMTNMDLSLPAMRSNGMEDGTSSAANYHHSYFGLDASNPSFTSGINGYTEFRPSNGH.

The segment at 1–54 (MAEAVDEDSGVGRSLEESSNGQHSQAGEALSEWRSSGQVENGTPSTSPSYWDID) is disordered. The residue at position 2 (Ala2) is an N-acetylalanine. The segment covering 33–49 (WRSSGQVENGTPSTSPS) has biased composition (polar residues). Positions 67 to 198 (YGQYTWKIPK…SGCLTIEAKV (132 aa)) constitute an MATH domain. 6 disordered regions span residues 358 to 388 (LPPK…ERDE), 440 to 666 (TEQR…SNVG), 697 to 762 (SIVN…QVVL), 780 to 800 (LSAP…APII), 812 to 841 (SSVQ…NQQT), and 858 to 889 (SSSS…PTSS). 2 stretches are compositionally biased toward basic and acidic residues: residues 359-388 (PPKD…ERDE) and 440-453 (TEQR…EREK). Residues 446 to 507 (RGAAEREKKS…EEEKDSVTEK (62 aa)) are a coiled coil. A compositionally biased stretch (basic residues) spans 454–471 (KSKKKQAKQKRNKNKGKD). The segment covering 472–488 (KRKEEKVSFATHAKDLE) has biased composition (basic and acidic residues). Low complexity-rich tracts occupy residues 519–534 (GDVS…SADI) and 560–573 (SSEG…ISIS). Polar residues-rich tracts occupy residues 588 to 630 (DDSS…QQVK) and 645 to 666 (QPST…SNVG). Composition is skewed to low complexity over residues 858 to 871 (SSSS…SSHG) and 878 to 889 (PSSSYSQAPTSS).

As to quaternary structure, forms homooligomers. Interacts with SNC1, RPS2 and CPR1/CPR30. Interacts with ATG6.

The protein localises to the cytoplasm. It localises to the cell membrane. Functions redundantly with TRAF1A in the regulation of plant immune response. Contributes to the turnover of the nucleotide-binding domain and leucine-rich repeat-containing (NB-LRR) immune receptors SNC1 and RPS2. May associate with an E3 ubiquitin-protein ligase complex, which modulates ubiquitination and subsequent degradation of NB-LRR immune sensors to maintain their homeostasis. Functions redundantly with TRAF1A in the regulation of autophagosome formation. Required for SINAT1- and SINAT2-mediated ubiquitination and destabilization of ATG6. Functions as a molecular adapter that helps to regulate autophagy by modulating ATG6 stability. This is TNF receptor-associated factor homolog 1b from Arabidopsis thaliana (Mouse-ear cress).